Consider the following 374-residue polypeptide: tRNA-specific 2-thiouridylase MnmA (374 aa).

Residues 13–20 (GMSGGVDS) and methionine 39 each bind ATP. Positions 99–101 (NPD) are interaction with target base in tRNA. Cysteine 104 serves as the catalytic Nucleophile. Cysteine 104 and cysteine 201 are disulfide-bonded. Residue glycine 128 coordinates ATP. The interaction with tRNA stretch occupies residues 151–153 (KDQ). The Cysteine persulfide intermediate role is filled by cysteine 201. Residues 313–314 (RY) are interaction with tRNA.

Belongs to the MnmA/TRMU family.

Its subcellular location is the cytoplasm. The catalysed reaction is S-sulfanyl-L-cysteinyl-[protein] + uridine(34) in tRNA + AH2 + ATP = 2-thiouridine(34) in tRNA + L-cysteinyl-[protein] + A + AMP + diphosphate + H(+). Functionally, catalyzes the 2-thiolation of uridine at the wobble position (U34) of tRNA, leading to the formation of s(2)U34. The chain is tRNA-specific 2-thiouridylase MnmA from Streptococcus equi subsp. zooepidemicus (strain MGCS10565).